An 87-amino-acid polypeptide reads, in one-letter code: MKVLRAWLLCLLMLGLALRGAASRTHRHSMEIRTPDINPAWYASRGIRPVGRFGRRRATLGDVPKPGLRPRLTCFPLEGGAMSSQDG.

The first 22 residues, 1–22 (MKVLRAWLLCLLMLGLALRGAA), serve as a signal peptide directing secretion. Phe53 is subject to Phenylalanine amide. A propeptide spanning residues 58–87 (ATLGDVPKPGLRPRLTCFPLEGGAMSSQDG) is cleaved from the precursor.

Medulla oblongata and hypothalamus.

The protein localises to the secreted. In terms of biological role, stimulates prolactin (PRL) release and regulates the expression of prolactin through its receptor GPR10. May stimulate lactotrophs directly to secrete PRL. This is Prolactin-releasing peptide (PRLH) from Homo sapiens (Human).